Consider the following 421-residue polypeptide: 4-hydroxy-3-methylbut-2-en-1-yl diphosphate synthase (flavodoxin) (421 aa).

[4Fe-4S] cluster is bound by residues Cys-298, Cys-301, Cys-344, and Glu-351.

This sequence belongs to the IspG family. [4Fe-4S] cluster is required as a cofactor.

It carries out the reaction (2E)-4-hydroxy-3-methylbut-2-enyl diphosphate + oxidized [flavodoxin] + H2O + 2 H(+) = 2-C-methyl-D-erythritol 2,4-cyclic diphosphate + reduced [flavodoxin]. Its pathway is isoprenoid biosynthesis; isopentenyl diphosphate biosynthesis via DXP pathway; isopentenyl diphosphate from 1-deoxy-D-xylulose 5-phosphate: step 5/6. In terms of biological role, converts 2C-methyl-D-erythritol 2,4-cyclodiphosphate (ME-2,4cPP) into 1-hydroxy-2-methyl-2-(E)-butenyl 4-diphosphate. The polypeptide is 4-hydroxy-3-methylbut-2-en-1-yl diphosphate synthase (flavodoxin) (Neisseria gonorrhoeae (strain ATCC 700825 / FA 1090)).